A 240-amino-acid polypeptide reads, in one-letter code: MAALRRMLHLPRLTMGTCRPFAGSLADSCLADRCLWDRLHAQPRLGTVPTFDWFFGYEEVQGLLLPLLQEAQAASPLRVLDVGCGTSSLCTGLYTKSPHPVDVLGVDFSPVAVAHMNSLLEGGPGQTPLCPGHPASSLHFMHADARNLGAVASSGSFQLLLDKGTWDAVAQGGLPRAYQLLSECLRVLNPQGTLIQFSDEDPDVRLPCLEQGSRGWTVTVQELGPFRGITYFAYLIQGSH.

The transit peptide at 1-21 directs the protein to the mitochondrion; that stretch reads MAALRRMLHLPRLTMGTCRPF.

Belongs to the methyltransferase superfamily.

It is found in the mitochondrion. The enzyme catalyses L-lysyl-[citrate synthase] + S-adenosyl-L-methionine = N(6)-methyl-L-lysyl-[citrate synthase] + S-adenosyl-L-homocysteine + H(+). The catalysed reaction is N(6)-methyl-L-lysyl-[citrate synthase] + S-adenosyl-L-methionine = N(6),N(6)-dimethyl-L-lysyl-[citrate synthase] + S-adenosyl-L-homocysteine + H(+). It catalyses the reaction N(6),N(6)-dimethyl-L-lysyl-[citrate synthase] + S-adenosyl-L-methionine = N(6),N(6),N(6)-trimethyl-L-lysyl-[citrate synthase] + S-adenosyl-L-homocysteine + H(+). Citrate synthase-lysine methyltransferase activity is inhibited by S-adenosylhomocysteine (AdoHcy) and oxaloacetate (OAA). In terms of biological role, protein-lysine methyltransferase that selectively trimethylates citrate synthase (CS) in mitochondria. Seems to conduct trimethylation in a highly distributive manner rather than in a processive manner, and thus introduces a single methyl group per binding event. This Pongo abelii (Sumatran orangutan) protein is Citrate synthase-lysine N-methyltransferase CSKMT, mitochondrial.